The primary structure comprises 146 residues: Hemoglobin subunit beta (146 aa).

The residue at position 1 (Val-1) is an N-acetylvaline. The Globin domain occupies 2–146 (HLTPEEKNAV…VANALAHKYH (145 aa)). Position 12 is a phosphothreonine (Thr-12). Ser-44 carries the post-translational modification Phosphoserine. An N6-acetyllysine modification is found at Lys-59. His-63 serves as a coordination point for heme b. Lys-82 is subject to N6-acetyllysine. Residue His-92 coordinates heme b. An S-nitrosocysteine modification is found at Cys-93. Position 144 is an N6-acetyllysine (Lys-144).

The protein belongs to the globin family. In terms of assembly, heterotetramer of two alpha chains and two beta chains. As to expression, red blood cells.

Its function is as follows. Involved in oxygen transport from the lung to the various peripheral tissues. The protein is Hemoglobin subunit beta (HBB) of Macaca mulatta (Rhesus macaque).